The chain runs to 291 residues: Beta-lactamase OXY-1 (291 aa).

The signal sequence occupies residues 1–24 (MLKSSWRKTALMAAAAVPLLLASG). Ser-73 serves as the catalytic Acyl-ester intermediate. Residue 237–239 (KTG) participates in substrate binding.

It belongs to the class-A beta-lactamase family.

The enzyme catalyses a beta-lactam + H2O = a substituted beta-amino acid. Its function is as follows. Hydrolyzes broad-spectrum beta-lactam antibiotics. Active against cephalosporins. The protein is Beta-lactamase OXY-1 (bla) of Klebsiella oxytoca.